The following is a 70-amino-acid chain: MKTQFVILLVALVLFQMFAQSEAIFSAIGGFLKSIFGKRGLQDLDMDDLDQLFDGEISQADINFLNQLMR.

The signal sequence occupies residues 1–23 (MKTQFVILLVALVLFQMFAQSEA). Phenylalanine 36 carries the phenylalanine amide modification. Residues 40–70 (GLQDLDMDDLDQLFDGEISQADINFLNQLMR) constitute a propeptide that is removed on maturation.

Belongs to the non-disulfide-bridged peptide (NDBP) superfamily. Short antimicrobial peptide (group 4) family. As to expression, expressed by the venom gland.

It is found in the secreted. Its subcellular location is the target cell membrane. In terms of biological role, amphipathic peptide with antimicrobial activity. The sequence is that of Peptide Hp1035 from Heterometrus petersii (Asian forest scorpion).